Reading from the N-terminus, the 251-residue chain is ATP synthase subunit a (251 aa).

Transmembrane regions (helical) follow at residues 34–54 (VFLTSWFVIGVLVLASVAASS), 93–113 (FVGTLFLFIFVSNWSGALVPF), 130–150 (INTTVALALLTSLAYFYAGFS), 195–215 (LVVGVLVLLVPLFVPLPVMAL), and 216–236 (GLFTSAIQALIFATLAAAYIG).

The protein belongs to the ATPase A chain family. F-type ATPases have 2 components, CF(1) - the catalytic core - and CF(0) - the membrane proton channel. CF(1) has five subunits: alpha(3), beta(3), gamma(1), delta(1), epsilon(1). CF(0) has four main subunits: a, b, b' and c.

It is found in the cellular thylakoid membrane. Functionally, key component of the proton channel; it plays a direct role in the translocation of protons across the membrane. The chain is ATP synthase subunit a from Trichormus variabilis (strain ATCC 29413 / PCC 7937) (Anabaena variabilis).